Reading from the N-terminus, the 514-residue chain is Probable cytosol aminopeptidase (514 aa).

Mn(2+) contacts are provided by Lys266 and Asp271. Lys278 is a catalytic residue. Mn(2+) is bound by residues Asp289, Asp357, and Glu359. Residue Arg361 is part of the active site.

Belongs to the peptidase M17 family. It depends on Mn(2+) as a cofactor.

Its subcellular location is the cytoplasm. It carries out the reaction Release of an N-terminal amino acid, Xaa-|-Yaa-, in which Xaa is preferably Leu, but may be other amino acids including Pro although not Arg or Lys, and Yaa may be Pro. Amino acid amides and methyl esters are also readily hydrolyzed, but rates on arylamides are exceedingly low.. The catalysed reaction is Release of an N-terminal amino acid, preferentially leucine, but not glutamic or aspartic acids.. In terms of biological role, presumably involved in the processing and regular turnover of intracellular proteins. Catalyzes the removal of unsubstituted N-terminal amino acids from various peptides. The chain is Probable cytosol aminopeptidase from Oleidesulfovibrio alaskensis (strain ATCC BAA-1058 / DSM 17464 / G20) (Desulfovibrio alaskensis).